The primary structure comprises 221 residues: Chalcone--flavanone isomerase 2 (221 aa).

Thr-50, Asn-115, and Ser-192 together coordinate substrate.

Belongs to the chalcone isomerase family.

It catalyses the reaction a chalcone = a flavanone.. It functions in the pathway secondary metabolite biosynthesis; flavonoid biosynthesis. Catalyzes the intramolecular cyclization of bicyclic chalcones into tricyclic (S)-flavanones. Responsible for the isomerization of 4,2',4',6'-tetrahydroxychalcone (also termed chalcone) into naringenin. This Lotus japonicus (Lotus corniculatus var. japonicus) protein is Chalcone--flavanone isomerase 2 (CHI2).